Consider the following 301-residue polypeptide: Polynucleotide kinase (301 aa).

Homotetramer. Mg(2+) is required as a cofactor.

It catalyses the reaction a 5'-end dephospho-2'-deoxyribonucleoside-DNA + ATP = a 5'-end 5'-phospho-2'-deoxyribonucleoside-DNA + ADP + H(+). It carries out the reaction a 2'-deoxyribonucleoside 3'-phosphate + H2O = a 2'-deoxyribonucleoside + phosphate. Functionally, acts as a 5'-hydroxyl kinase, a 3'-phosphatase and a 2',3'-cyclic phosphodiesterase. Catalyzes the transfer of the terminal phosphate of ATP to the 5'-hydroxyl termini of ribo- and deoxyribonucleotides. In the presence of ADP the enzyme also catalyzes an exchange reaction. In the exchange reaction, an excess ADP causes the enzyme to transfer the 5' terminal phosphate from phosphorylated DNA to ADP. Involved in countering a host defense mechanism which activates T4-induced anticodon nuclease and shuts off viral translation. The polynucleotide kinase modifies the ends of nicked tRNA generated by the antiviral response of the host bacteria and facilitates repair by T4 RNA ligase. The sequence is that of Polynucleotide kinase (pseT) from Escherichia coli (Bacteriophage T4).